Consider the following 426-residue polypeptide: Inhibin beta A chain (426 aa).

An N-terminal signal peptide occupies residues 1–20 (MPLLWLRGFLLASCWIIVKS). A propeptide spanning residues 21-310 (SPTPGSEGHS…EDHPHRRRRR (290 aa)) is cleaved from the precursor. N-linked (GlcNAc...) asparagine glycosylation is present at asparagine 165. Polar residues predominate over residues 177–186 (QQQKHPQGSS). Disordered regions lie at residues 177–201 (QQQK…MEER) and 260–291 (KKKK…SHRP). A compositionally biased stretch (basic and acidic residues) spans 263-275 (KEEEGEGKKKDGG). Disulfide bonds link cysteine 314–cysteine 322, cysteine 321–cysteine 391, cysteine 350–cysteine 423, and cysteine 354–cysteine 425.

This sequence belongs to the TGF-beta family. In terms of assembly, dimeric, linked by one or more disulfide bonds. Inhibin A is a dimer of alpha/INHA and beta-A/INHBA. Activin A is a homodimer of beta-A/INHBA. Activin AB is a dimer of beta-A/INHBA and beta-B/INHBB. Interacts with FST and FSTL3; these interactions prevent activin A interaction to its type II receptor. Activin A interacts with ACVR2A. Activin A interacts with BMPR2. Inhibin A interacts with ACVR1; this interaction creates a non-signaling complex (NSC) that inhibits ACVR1-mediated BMP signaling. Inhibin A interacts with ACVR2A.

It localises to the secreted. Its function is as follows. Inhibins/activins are involved in regulating a number of diverse functions such as hypothalamic and pituitary hormone secretion, gonadal hormone secretion, germ cell development and maturation, erythroid differentiation, insulin secretion, nerve cell survival, embryonic axial development or bone growth, depending on their subunit composition. Functionally, activin A is a homodimer of INHBA that plays a role in several essential biological processes including embryonic development, stem cell maintenance and differentiation, haematopoiesis, cell proliferation and tissue fibrosis. Signals through type I (such as ACVR1B or ACVR1C) and type II receptors (such as ACVR2A, ACVR2B or BMPR2) which, upon ligand binding, phosphorylate SMAD2 and SMAD3 intracellular signaling mediators that form a complex with SMAD4, translocate to the nucleus and modulate gene expression. Can also activate alternative non-canonical intracellular signaling pathways including the p38 MAPK, extracellular signal-regulated kinases 1/2 (ERK1/2) and c-Jun N-terminal kinases (JNKs) to modulate cell migration and differentiation. Alternatively, promotes osteoblastic differentiation via ACVRL1-SMAD1/5/9 pathway. In addition, can engage the type I receptor ACVR1 to form an ACVR1-activin A-type II receptor non-signaling complex (NSC) that renders receptors unavailable for engagement with BMPs, hence resulting in an apparent inhibition of ACVR1-mediated BMP signaling. In terms of biological role, inhibin A is a dimer of alpha/INHA and beta-A/INHBA that functions as a feedback regulator in the hypothalamic-pituitary-gonadal (HPG) axis. Inhibits the secretion of FSH from the anterior pituitary gland by acting on pituitary gonadotrope cells. Antagonizes activin A by binding to the proteoglycan, betaglycan, and forming a stable complex with and, thereby, sequestering type II activin receptors while excluding type I receptor. The chain is Inhibin beta A chain (INHBA) from Equus caballus (Horse).